The primary structure comprises 849 residues: Leucine--tRNA ligase (849 aa).

Residues 44-54 carry the 'HIGH' region motif; that stretch reads PYPSGRIHMGH. Positions 620–624 match the 'KMSKS' region motif; the sequence is KMSKS. K623 contributes to the ATP binding site.

Belongs to the class-I aminoacyl-tRNA synthetase family.

The protein localises to the cytoplasm. It catalyses the reaction tRNA(Leu) + L-leucine + ATP = L-leucyl-tRNA(Leu) + AMP + diphosphate. This Sphingopyxis alaskensis (strain DSM 13593 / LMG 18877 / RB2256) (Sphingomonas alaskensis) protein is Leucine--tRNA ligase.